Reading from the N-terminus, the 264-residue chain is tRNA pseudouridine synthase A (264 aa).

Catalysis depends on Asp-54, which acts as the Nucleophile. Tyr-113 contributes to the substrate binding site.

This sequence belongs to the tRNA pseudouridine synthase TruA family. Homodimer.

It catalyses the reaction uridine(38/39/40) in tRNA = pseudouridine(38/39/40) in tRNA. Formation of pseudouridine at positions 38, 39 and 40 in the anticodon stem and loop of transfer RNAs. This is tRNA pseudouridine synthase A from Leptospira biflexa serovar Patoc (strain Patoc 1 / Ames).